A 506-amino-acid chain; its full sequence is MQNFKELGISDNTVQSLESMGFKEPTPIQKDSIPYALQGIDILGQAQTGTGKTGAFGIPLIEKVVGKQGVQSLILAPTRELAMQVAEQLREFSRGQGVQVVTVFGGMPIERQIKALKKGPQIVVGTPGRVIDHLNRRTLKTDGIHTLILDEADEMMNMGFIDDMRFIMDKIPAVQRQTMLFSATMPKAIQALVQQFMKSPKIIKTMNNEMSDPQIEEFYTIVKELEKFDTFTNFLDVHQPELAIVFGRTKRRVDELTSALISKGYKAEGLHGDITQAKRLEVLKKFKNDQINILVATDVAARGLDISGVSHVYNFDIPQDTESYTHRIGRTGRAGKEGIAVTFVNPIEMDYIRQIEDANGRKMSALRPPHRKEVLQAREDDIKEKVENWMSKESESRLKRISTELLNEYNDVDLVAALLQELVEANDEVEVQLTFEKPLSRKGRNGKPSGSRNRNSKRGNPKFDSKSKRSKGYSSKKKSTKKFDRKEKSSGGSRPMKGRTFADHQK.

Residues 2-30 (QNFKELGISDNTVQSLESMGFKEPTPIQK) carry the Q motif motif. The region spanning 33 to 203 (IPYALQGIDI…QQFMKSPKII (171 aa)) is the Helicase ATP-binding domain. 46–53 (AQTGTGKT) contacts ATP. The DEAD box motif lies at 150 to 153 (DEAD). The region spanning 214–375 (QIEEFYTIVK…LRPPHRKEVL (162 aa)) is the Helicase C-terminal domain. The segment at 436-506 (EKPLSRKGRN…KGRTFADHQK (71 aa)) is disordered. Basic residues predominate over residues 468–480 (KRSKGYSSKKKST).

Belongs to the DEAD box helicase family. CshA subfamily. As to quaternary structure, oligomerizes, may be a member of the RNA degradosome.

The protein localises to the cytoplasm. It catalyses the reaction ATP + H2O = ADP + phosphate + H(+). DEAD-box RNA helicase possibly involved in RNA degradation. Unwinds dsRNA in both 5'- and 3'-directions, has RNA-dependent ATPase activity. This Staphylococcus aureus (strain MW2) protein is DEAD-box ATP-dependent RNA helicase CshA.